A 47-amino-acid chain; its full sequence is Large ribosomal subunit protein bL34 (47 aa).

Belongs to the bacterial ribosomal protein bL34 family.

The polypeptide is Large ribosomal subunit protein bL34 (Mycobacterium ulcerans (strain Agy99)).